The sequence spans 478 residues: Shikimate biosynthesis protein AroDE (478 aa).

The segment at 1-208 is 3-dehydroquinate dehydratase; that stretch reads MLCTTISGPS…LKHHYFYNFA (208 aa). Residues Ser21, 29–31, and 55–57 contribute to the 3-dehydroquinate site; these read EMR and AWK. His110 acts as the Proton donor/acceptor; for 3-dehydroquinate dehydratase activity in catalysis. Lys133 acts as the Schiff-base intermediate with substrate; for 3-dehydroquinate dehydratase activity in catalysis. Positions 171 and 196 each coordinate 3-dehydroquinate. Residues 209–478 form a shikimate 5-dehydrogenase region; it reads SLSAQSPICA…VLASLFSIAP (270 aa). Position 226-228 (226-228) interacts with shikimate; that stretch reads SIG. Catalysis depends on Lys277, which acts as the Proton acceptor; for shikimate dehydrogenase activity. Residues Asn298 and Asp313 each contribute to the shikimate site. NADP(+)-binding positions include 337 to 341, 360 to 362, and Gly435; these read GAGGA and NRT. Residue Gln442 coordinates shikimate.

In the N-terminal section; belongs to the type-I 3-dehydroquinase family. It in the C-terminal section; belongs to the shikimate dehydrogenase family.

The enzyme catalyses 3-dehydroquinate = 3-dehydroshikimate + H2O. It catalyses the reaction shikimate + NADP(+) = 3-dehydroshikimate + NADPH + H(+). It participates in metabolic intermediate biosynthesis; chorismate biosynthesis; chorismate from D-erythrose 4-phosphate and phosphoenolpyruvate: step 3/7. It functions in the pathway metabolic intermediate biosynthesis; chorismate biosynthesis; chorismate from D-erythrose 4-phosphate and phosphoenolpyruvate: step 4/7. Bifunctional enzyme that catalyzes two sequential steps of the aromatic amino acids biosynthetic pathway. In the first reaction, the AroD domain catalyzes the cis-dehydration of 3-dehydroquinate (DHQ) and introduces the first double bond of the aromatic ring to yield 3-dehydroshikimate; in the second reaction, the AroE domain catalyzes the reversible NADPH linked reduction of 3-dehydroshikimate (DHSA) to yield shikimate (SA). In Chlamydia trachomatis serovar D (strain ATCC VR-885 / DSM 19411 / UW-3/Cx), this protein is Shikimate biosynthesis protein AroDE.